The following is an 852-amino-acid chain: Lon protease homolog 2, peroxisomal (852 aa).

Ser-2 is modified (N-acetylserine). The 210-residue stretch at 13–222 (LPLLLTHEGV…MTIPLLVRQI (210 aa)) folds into the Lon N-terminal domain. ATP is bound at residue 375–382 (GPPGVGKT). Positions 651–837 (LSQPGVAIGL…DEVLNAAFDG (187 aa)) constitute a Lon proteolytic domain. Catalysis depends on residues Ser-743 and Lys-786. The Microbody targeting signal signature appears at 850–852 (SKL).

It belongs to the peptidase S16 family. Interacts with PEX5. Interacts with TYSND1. May interact with enzymes involved in beta-oxidation of fatty acids, including ACOX1/AOX. As to expression, widely expressed, with high levels in the liver, kidney and pancreas.

The protein localises to the peroxisome matrix. It catalyses the reaction Hydrolysis of proteins in presence of ATP.. Functionally, ATP-dependent serine protease that mediates the selective degradation of misfolded and unassembled polypeptides in the peroxisomal matrix. Necessary for type 2 peroxisome targeting signal (PTS2)-containing protein processing and facilitates peroxisome matrix protein import. May indirectly regulate peroxisomal fatty acid beta-oxidation through degradation of the self-processed forms of TYSND1. The chain is Lon protease homolog 2, peroxisomal from Homo sapiens (Human).